A 366-amino-acid chain; its full sequence is Chorismate synthase (366 aa).

Positions 48 and 54 each coordinate NADP(+). FMN is bound by residues 125–127 (RSS), 238–239 (NA), Gly278, 293–297 (KPTSS), and Arg319.

The protein belongs to the chorismate synthase family. In terms of assembly, homotetramer. The cofactor is FMNH2.

It catalyses the reaction 5-O-(1-carboxyvinyl)-3-phosphoshikimate = chorismate + phosphate. The protein operates within metabolic intermediate biosynthesis; chorismate biosynthesis; chorismate from D-erythrose 4-phosphate and phosphoenolpyruvate: step 7/7. Its function is as follows. Catalyzes the anti-1,4-elimination of the C-3 phosphate and the C-6 proR hydrogen from 5-enolpyruvylshikimate-3-phosphate (EPSP) to yield chorismate, which is the branch point compound that serves as the starting substrate for the three terminal pathways of aromatic amino acid biosynthesis. This reaction introduces a second double bond into the aromatic ring system. This chain is Chorismate synthase, found in Pseudoalteromonas atlantica (strain T6c / ATCC BAA-1087).